The chain runs to 180 residues: UPF0340 protein llmg_0465 (180 aa).

It belongs to the UPF0340 family.

This is UPF0340 protein llmg_0465 from Lactococcus lactis subsp. cremoris (strain MG1363).